The following is a 276-amino-acid chain: 2-dehydro-3-deoxyphosphooctonate aldolase (276 aa).

This sequence belongs to the KdsA family.

The protein resides in the cytoplasm. It carries out the reaction D-arabinose 5-phosphate + phosphoenolpyruvate + H2O = 3-deoxy-alpha-D-manno-2-octulosonate-8-phosphate + phosphate. It participates in carbohydrate biosynthesis; 3-deoxy-D-manno-octulosonate biosynthesis; 3-deoxy-D-manno-octulosonate from D-ribulose 5-phosphate: step 2/3. Its pathway is bacterial outer membrane biogenesis; lipopolysaccharide biosynthesis. The polypeptide is 2-dehydro-3-deoxyphosphooctonate aldolase (Chelativorans sp. (strain BNC1)).